The sequence spans 116 residues: uncharacterized protein (116 aa).

Positions R64–R116 are disordered. A compositionally biased stretch (low complexity) spans R73 to S87. The segment covering R90–K105 has biased composition (basic and acidic residues).

This is an uncharacterized protein from Saccharomyces cerevisiae (strain ATCC 204508 / S288c) (Baker's yeast).